Consider the following 104-residue polypeptide: Cytochrome c6 (104 aa).

The first 20 residues, 1–20 (MKSLLTFILTTIFCIQQVWA), serve as a signal peptide directing secretion. 4 residues coordinate heme c: Cys34, Cys37, His38, and Met78.

The protein belongs to the cytochrome c family. PetJ subfamily. As to quaternary structure, monomer. Post-translationally, binds 1 heme c group covalently per subunit.

The protein resides in the plastid. It localises to the chloroplast thylakoid lumen. Functionally, functions as an electron carrier between membrane-bound cytochrome b6-f and photosystem I in oxygenic photosynthesis. In Cyanidioschyzon merolae (strain NIES-3377 / 10D) (Unicellular red alga), this protein is Cytochrome c6.